The chain runs to 294 residues: MSELLTKKISAFIITKNEAARIERAINSVKNIADEVIVVDSESTDKTVIIAESLGAKVVVKPWLGYVGQKSFAETICKNDWILNIDADEELSKELQDEIEYIFASQNQDRYLAYQIKLLIMHRNDTRPRIFAPYNKCTRLYNKKFASFANTINSTTHDSVVFNKDVDFANKIYTLNEAAYHYSGTSIEQLVAKANFYSGEQAKDLIKQGKKPSNIRIATEMIWWFFKAFFIRRYFVFGFDGFVDSMIFAFARFLRLAKLRELSLQCNPATRSQDLKTQFVIQDPVDKPRDDNIV.

It belongs to the glycosyltransferase 2 family. WaaE/KdtX subfamily.

This is an uncharacterized protein from Rickettsia bellii (strain RML369-C).